The following is a 507-amino-acid chain: Histidine ammonia-lyase (507 aa).

The 5-imidazolinone (Ala-Gly) cross-link spans 145–147 (ASG). Position 146 is a 2,3-didehydroalanine (Ser) (Ser-146).

Belongs to the PAL/histidase family. Contains an active site 4-methylidene-imidazol-5-one (MIO), which is formed autocatalytically by cyclization and dehydration of residues Ala-Ser-Gly.

The protein resides in the cytoplasm. The catalysed reaction is L-histidine = trans-urocanate + NH4(+). Its pathway is amino-acid degradation; L-histidine degradation into L-glutamate; N-formimidoyl-L-glutamate from L-histidine: step 1/3. In Treponema denticola (strain ATCC 35405 / DSM 14222 / CIP 103919 / JCM 8153 / KCTC 15104), this protein is Histidine ammonia-lyase.